The sequence spans 218 residues: Elongation factor Ts (218 aa).

The interval 82-85 is involved in Mg(2+) ion dislocation from EF-Tu; sequence TDFV.

This sequence belongs to the EF-Ts family.

The protein localises to the cytoplasm. In terms of biological role, associates with the EF-Tu.GDP complex and induces the exchange of GDP to GTP. It remains bound to the aminoacyl-tRNA.EF-Tu.GTP complex up to the GTP hydrolysis stage on the ribosome. This chain is Elongation factor Ts, found in Prochlorococcus marinus (strain NATL2A).